Consider the following 417-residue polypeptide: Gamma-glutamyl phosphate reductase (417 aa).

This sequence belongs to the gamma-glutamyl phosphate reductase family.

It localises to the cytoplasm. It catalyses the reaction L-glutamate 5-semialdehyde + phosphate + NADP(+) = L-glutamyl 5-phosphate + NADPH + H(+). The protein operates within amino-acid biosynthesis; L-proline biosynthesis; L-glutamate 5-semialdehyde from L-glutamate: step 2/2. Functionally, catalyzes the NADPH-dependent reduction of L-glutamate 5-phosphate into L-glutamate 5-semialdehyde and phosphate. The product spontaneously undergoes cyclization to form 1-pyrroline-5-carboxylate. This is Gamma-glutamyl phosphate reductase from Escherichia coli O45:K1 (strain S88 / ExPEC).